We begin with the raw amino-acid sequence, 387 residues long: Decapping nuclease RAI1 (387 aa).

An a divalent metal cation-binding site is contributed by E172. S198 bears the Phosphoserine mark. E221 lines the substrate pocket. Residues D223, E241, and L242 each coordinate a divalent metal cation. Substrate-binding residues include K243 and Q267. Residues 273–387 (IPRIIYGFKD…GFKEWRKSLK (115 aa)) are interaction with RAT1.

It belongs to the DXO/Dom3Z family. Interacts with RAT1, RTT103 and pre-60S ribosomal subunits. Interacts with RAT1; the interaction is direct, stabilizes RAT1 protein structure and stimulates its exoribonuclease activity. The interaction also stimulates RAI1 pyrophosphohydrolase activity, probably by recruiting it to mRNA substrates. The cofactor is a divalent metal cation.

The protein resides in the nucleus. The enzyme catalyses a 5'-end NAD(+)-phospho-ribonucleoside in mRNA + H2O = a 5'-end phospho-ribonucleoside in mRNA + NAD(+) + H(+). It catalyses the reaction a 5'-end (N(7)-methyl 5'-triphosphoguanosine)-ribonucleoside-ribonucleotide in mRNA + H2O = a (N(7)-methyl 5'-triphosphoguanosine)-nucleoside + a 5'-end phospho-ribonucleoside in mRNA + H(+). The catalysed reaction is a 5'-end triphospho-ribonucleoside in mRNA + H2O = a 5'-end phospho-ribonucleoside in mRNA + diphosphate + H(+). Functionally, decapping enzyme for NAD-capped RNAs: specifically hydrolyzes the nicotinamide adenine dinucleotide (NAD) cap from a subset of RNAs by removing the entire NAD moiety from the 5'-end of an NAD-capped RNA. The NAD-cap is present at the 5'-end of some RNAs and snoRNAs. In contrast to the canonical 5'-end N7 methylguanosine (m7G) cap, the NAD cap promotes mRNA decay. Also acts as a non-canonical decapping enzyme that removes the entire cap structure of m7G capped or incompletely capped RNAs. Has decapping activity toward incomplete 5'-end m7G cap mRNAs such as unmethylated 5'-end-capped RNA (cap0), while it has no activity toward 2'-O-ribose methylated m7G cap (cap1). Also possesses RNA 5'-pyrophosphohydrolase activity by hydrolyzing the 5'-end triphosphate to release pyrophosphates. Stimulates exoribonuclease activity of RAT1, allowing it to degrade RNAs with stable secondary structure more effectively. Required for the processing of nuclear mRNA and rRNA precursors. May promote termination of transcription by RNA polymerase II. This Saccharomyces cerevisiae (strain ATCC 204508 / S288c) (Baker's yeast) protein is Decapping nuclease RAI1.